Reading from the N-terminus, the 128-residue chain is RYamide neuropeptides (128 aa).

Residues 1 to 23 form the signal peptide; the sequence is MHARKLIVVLVYILTVLVSVAVS. Residues 26–29 constitute a propeptide that is removed on maturation; that stretch reads YTSE. Residue Tyr-44 is modified to Tyrosine amide. The propeptide occupies 47–63; that stretch reads GGPSPNNKENKVNIRPR. Tyr-73 bears the Tyrosine amide mark. A propeptide spanning residues 77-128 is cleaved from the precursor; that stretch reads SGWSPNASLVYPVSTPLCGLDEDLSCAYTGISDLYRCTPRKGESEEFTTSSN.

The protein resides in the secreted. Its function is as follows. Neuropeptides RYamide-1 and RYamide-2 are ligands for the G-protein coupled receptor RYa-R. RYamide-2 is the most potent activator of RYa-R. The protein is RYamide neuropeptides of Tribolium castaneum (Red flour beetle).